Here is a 359-residue protein sequence, read N- to C-terminus: Mannonate dehydratase (359 aa).

It belongs to the mannonate dehydratase family. Requires Fe(2+) as cofactor. The cofactor is Mn(2+).

It carries out the reaction D-mannonate = 2-dehydro-3-deoxy-D-gluconate + H2O. The protein operates within carbohydrate metabolism; pentose and glucuronate interconversion. Functionally, catalyzes the dehydration of D-mannonate. The chain is Mannonate dehydratase (uxuA) from Bacillus subtilis (strain 168).